The chain runs to 174 residues: Nucleoside-triphosphatase THEP1 (174 aa).

ATP is bound by residues 7-14 (GRPGVGKT) and 94-101 (LIIIDEIG).

The protein belongs to the THEP1 NTPase family.

The enzyme catalyses a ribonucleoside 5'-triphosphate + H2O = a ribonucleoside 5'-diphosphate + phosphate + H(+). In terms of biological role, has nucleotide phosphatase activity towards ATP, GTP, CTP, TTP and UTP. May hydrolyze nucleoside diphosphates with lower efficiency. This Thermotoga sp. (strain RQ2) protein is Nucleoside-triphosphatase THEP1.